A 295-amino-acid polypeptide reads, in one-letter code: uncharacterized protein (295 aa).

This is an uncharacterized protein from Rickettsia prowazekii (strain Madrid E).